Reading from the N-terminus, the 510-residue chain is Amidophosphoribosyltransferase (510 aa).

Cysteine 2 serves as the catalytic Nucleophile. One can recognise a Glutamine amidotransferase type-2 domain in the interval 2-239; that stretch reads CGILGIALAD…PGEAVIIPKD (238 aa). Positions 373 and 374 each coordinate Mg(2+).

This sequence in the C-terminal section; belongs to the purine/pyrimidine phosphoribosyltransferase family. It depends on Mg(2+) as a cofactor.

It carries out the reaction 5-phospho-beta-D-ribosylamine + L-glutamate + diphosphate = 5-phospho-alpha-D-ribose 1-diphosphate + L-glutamine + H2O. The protein operates within purine metabolism; IMP biosynthesis via de novo pathway; N(1)-(5-phospho-D-ribosyl)glycinamide from 5-phospho-alpha-D-ribose 1-diphosphate: step 1/2. This Lachancea kluyveri (Yeast) protein is Amidophosphoribosyltransferase (ADE4).